The sequence spans 437 residues: Trigger factor (437 aa).

Positions 161 to 246 (DDQVNIDFVG…VNSVSAPVLP (86 aa)) constitute a PPIase FKBP-type domain.

This sequence belongs to the FKBP-type PPIase family. Tig subfamily.

The protein localises to the cytoplasm. It carries out the reaction [protein]-peptidylproline (omega=180) = [protein]-peptidylproline (omega=0). Functionally, involved in protein export. Acts as a chaperone by maintaining the newly synthesized protein in an open conformation. Functions as a peptidyl-prolyl cis-trans isomerase. In Pseudomonas putida (strain ATCC 47054 / DSM 6125 / CFBP 8728 / NCIMB 11950 / KT2440), this protein is Trigger factor.